Reading from the N-terminus, the 563-residue chain is Beta-catenin-like protein 1 (563 aa).

N-acetylmethionine is present on methionine 1. A disordered region spans residues methionine 1–valine 49. Positions lysine 16–threonine 33 match the Nuclear localization signal motif. Residues glycine 34 to glutamate 45 show a composition bias toward basic and acidic residues. HEAT repeat units lie at residues glutamate 79–threonine 129 and tyrosine 134–glutamate 176. Lysine 91 carries the post-translational modification N6-acetyllysine. The Nuclear export signal (NES) motif lies at methionine 130 to leucine 140. 5 ARM repeats span residues glutamate 178–phenylalanine 228, arginine 229–asparagine 273, aspartate 274–leucine 323, serine 325–glycine 363, and proline 364–asparagine 417. Serine 389 is subject to Phosphoserine. The stretch at aspartate 476 to isoleucine 540 forms a coiled coil. Serine 545 is subject to Phosphoserine.

Component of the PRP19-CDC5L splicing complex composed of a core complex comprising a homotetramer of PRPF19, CDC5L, PLRG1 and BCAS2, and at least three less stably associated proteins CTNNBL1, CWC15 and HSPA8. Interacts directly with CWC15 and CDC5L in the complex. Interacts with AICDA; the interaction is important for the antibody diversification activity of AICDA. Interacts with PRPF31 (via its NLS). Interacts (via its N-terminal NLS) with KPNA1 and KPNA2. In terms of tissue distribution, widely expressed with highest levels in skeletal muscle, placenta, heart, spleen, testis and thyroid.

It is found in the nucleus. The protein localises to the cytoplasm. Functionally, component of the PRP19-CDC5L complex that forms an integral part of the spliceosome and is required for activating pre-mRNA splicing. Participates in AID/AICDA-mediated somatic hypermutation (SHM) and class-switch recombination (CSR), 2 processes resulting in the production of high-affinity, mutated isotype-switched antibodies. This is Beta-catenin-like protein 1 (CTNNBL1) from Homo sapiens (Human).